Consider the following 377-residue polypeptide: Sterol 24-C-methyltransferase erg6 (377 aa).

Belongs to the class I-like SAM-binding methyltransferase superfamily. Erg6/SMT family.

Its subcellular location is the microsome. The protein localises to the mitochondrion. It catalyses the reaction lanosterol + S-adenosyl-L-methionine = eburicol + S-adenosyl-L-homocysteine + H(+). The protein operates within steroid metabolism; ergosterol biosynthesis. With respect to regulation, specific and total activity is decreased in presence of alpha-bisabolol. Its function is as follows. Sterol 24-C-methyltransferase; part of the third module of ergosterol biosynthesis pathway that includes the late steps of the pathway. Methylates lanosterol at C-24 to produce eburicol. The third module or late pathway involves the ergosterol synthesis itself through consecutive reactions that mainly occur in the endoplasmic reticulum (ER) membrane. Firstly, the squalene synthase erg9 catalyzes the condensation of 2 farnesyl pyrophosphate moieties to form squalene, which is the precursor of all steroids. Squalene synthase is crucial for balancing the incorporation of farnesyl diphosphate (FPP) into sterol and nonsterol isoprene synthesis. Secondly, squalene is converted into lanosterol by the consecutive action of the squalene epoxidase erg1 and the lanosterol synthase erg7. Then, the delta(24)-sterol C-methyltransferase erg6 methylates lanosterol at C-24 to produce eburicol. Eburicol is the substrate of the sterol 14-alpha demethylase encoded by cyp51A and cyp51B, to yield 4,4,24-trimethyl ergosta-8,14,24(28)-trienol. The C-14 reductase erg24 then reduces the C14=C15 double bond which leads to 4,4-dimethylfecosterol. A sequence of further demethylations at C-4, involving the C-4 demethylation complex containing the C-4 methylsterol oxidases erg25A or erg25B, the sterol-4-alpha-carboxylate 3-dehydrogenase erg26 and the 3-keto-steroid reductase erg27, leads to the production of fecosterol via 4-methylfecosterol. The C-8 sterol isomerase erg2 then catalyzes the reaction which results in unsaturation at C-7 in the B ring of sterols and thus converts fecosterol to episterol. The sterol-C5-desaturase erg3B then catalyzes the introduction of a C-5 double bond in the B ring to produce 5-dehydroepisterol. The 2 other sterol-C5-desaturases, erg3A and erg3C, seem to be less important in ergosterol biosynthesis. The C-22 sterol desaturase erg5 further converts 5-dehydroepisterol into ergosta-5,7,22,24(28)-tetraen-3beta-ol by forming the C-22(23) double bond in the sterol side chain. Finally, ergosta-5,7,22,24(28)-tetraen-3beta-ol is substrate of the C-24(28) sterol reductases erg4A and erg4B to produce ergosterol. Possible alternative sterol biosynthetic pathways might exist from fecosterol to ergosterol, depending on the activities of the erg3 isoforms. The polypeptide is Sterol 24-C-methyltransferase erg6 (Aspergillus fumigatus (strain ATCC MYA-4609 / CBS 101355 / FGSC A1100 / Af293) (Neosartorya fumigata)).